Reading from the N-terminus, the 418-residue chain is Serine--tRNA ligase (418 aa).

231–233 (TAE) is a binding site for L-serine. 262-264 (RSE) is a binding site for ATP. Glu285 serves as a coordination point for L-serine. 349–352 (EISS) provides a ligand contact to ATP. L-serine is bound at residue Ser385.

It belongs to the class-II aminoacyl-tRNA synthetase family. Type-1 seryl-tRNA synthetase subfamily. In terms of assembly, homodimer. The tRNA molecule binds across the dimer.

It localises to the cytoplasm. It catalyses the reaction tRNA(Ser) + L-serine + ATP = L-seryl-tRNA(Ser) + AMP + diphosphate + H(+). The enzyme catalyses tRNA(Sec) + L-serine + ATP = L-seryl-tRNA(Sec) + AMP + diphosphate + H(+). Its pathway is aminoacyl-tRNA biosynthesis; selenocysteinyl-tRNA(Sec) biosynthesis; L-seryl-tRNA(Sec) from L-serine and tRNA(Sec): step 1/1. Catalyzes the attachment of serine to tRNA(Ser). Is also able to aminoacylate tRNA(Sec) with serine, to form the misacylated tRNA L-seryl-tRNA(Sec), which will be further converted into selenocysteinyl-tRNA(Sec). The protein is Serine--tRNA ligase of Ureaplasma urealyticum serovar 10 (strain ATCC 33699 / Western).